The chain runs to 372 residues: NAD(P)H-quinone oxidoreductase subunit 1 (372 aa).

The next 8 helical transmembrane spans lie at 27–47, 97–117, 128–148, 176–196, 204–224, 266–286, 308–328, and 347–367; these read IIWL…GVLV, ILFT…WLIV, VGIG…GLLM, LALS…IDIV, ILSW…ICAL, ILSA…PIPV, SIGI…AILL, and FLLP…LAFP.

The protein belongs to the complex I subunit 1 family. NDH-1 is composed of at least 11 different subunits.

It localises to the cellular thylakoid membrane. It catalyses the reaction a plastoquinone + NADH + (n+1) H(+)(in) = a plastoquinol + NAD(+) + n H(+)(out). The enzyme catalyses a plastoquinone + NADPH + (n+1) H(+)(in) = a plastoquinol + NADP(+) + n H(+)(out). NDH-1 shuttles electrons from an unknown electron donor, via FMN and iron-sulfur (Fe-S) centers, to quinones in the respiratory and/or the photosynthetic chain. The immediate electron acceptor for the enzyme in this species is believed to be plastoquinone. Couples the redox reaction to proton translocation, and thus conserves the redox energy in a proton gradient. This chain is NAD(P)H-quinone oxidoreductase subunit 1, found in Prochlorococcus marinus (strain MIT 9215).